Here is a 109-residue protein sequence, read N- to C-terminus: Large ribosomal subunit protein uL24 (109 aa).

Belongs to the universal ribosomal protein uL24 family. In terms of assembly, part of the 50S ribosomal subunit.

In terms of biological role, one of two assembly initiator proteins, it binds directly to the 5'-end of the 23S rRNA, where it nucleates assembly of the 50S subunit. One of the proteins that surrounds the polypeptide exit tunnel on the outside of the subunit. The sequence is that of Large ribosomal subunit protein uL24 from Geotalea uraniireducens (strain Rf4) (Geobacter uraniireducens).